The sequence spans 350 residues: MKEVSLRGISKTFGQLTVLDRIDLEIHSGEFLVLVGPSGCGKSTLLRMVAGLEPISGGDLVIGGERANELPPQKRNIAMVFQSYALFPHMTARENIGFGPRIRGEKAAETAAKVDHAASILNLHSYLDRYPRQLSGGQRQRVAMGRAIVREPSVFLFDEPLSNLDAQLRVQMRTEIKALHQRLKSTVIYVTHDQIEAMTMADRIVVMNQGKIQQIGAPLDLYDRPANKFVAGFIGSPSMSFIPGTVADGFFCTGEGKKIAVSAAAKGARAAEAGIRPENFVIAREGAGLTLVVEVIEPTGPETHIYGRIAGEPVRAVFRERIQLAPGEQVPVTAGSEHIHLFDKESGLPL.

Residues 4 to 234 (VSLRGISKTF…PANKFVAGFI (231 aa)) form the ABC transporter domain. 36–43 (GPSGCGKS) contributes to the ATP binding site.

The protein belongs to the ABC transporter superfamily. In terms of assembly, the complex is composed of two ATP-binding proteins (BRA0745), two transmembrane proteins (BRA0749) and a solute-binding protein (BRA0748).

The protein resides in the cell inner membrane. In terms of biological role, probably part of an ABC transporter complex. Probably responsible for energy coupling to the transport system. The polypeptide is Putative ATP-binding protein BRA0745/BS1330_II0738 (Brucella suis biovar 1 (strain 1330)).